The following is a 749-amino-acid chain: Fibronectin type III and SPRY domain-containing protein 2 (749 aa).

Residues 205 to 317 (LNEALESAKD…TIEEMCHEEK (113 aa)) adopt a coiled-coil conformation. Fibronectin type-III domains follow at residues 375–470 (PVIN…TAPS) and 471–564 (PPII…TIGS). A B30.2/SPRY domain is found at 546-744 (NMGGPSVRSE…KVHNGISMPK (199 aa)).

As to quaternary structure, interacts with CMYA5. In cardiac muscles, identified in a complex composed of FSD2, CMYA5 and RYR2.

It localises to the nucleus. The protein resides in the sarcoplasmic reticulum. It is found in the cytoplasm. The protein localises to the perinuclear region. This is Fibronectin type III and SPRY domain-containing protein 2 (FSD2) from Homo sapiens (Human).